Reading from the N-terminus, the 108-residue chain is V-type proton ATPase subunit G (108 aa).

Over residues Tyr-48 to Glu-60 the composition is skewed to basic and acidic residues. The disordered stretch occupies residues Tyr-48–Ser-89. Polar residues predominate over residues Gln-79 to Ser-89.

This sequence belongs to the V-ATPase G subunit family. As to quaternary structure, V-ATPase is a heteromultimeric enzyme composed of a peripheral catalytic V1 complex (components A to H) attached to an integral membrane V0 proton pore complex (components: a, c, c', c'', d, e, f and VOA1).

It is found in the vacuole membrane. Functionally, subunit of the V1 complex of vacuolar(H+)-ATPase (V-ATPase), a multisubunit enzyme composed of a peripheral complex (V1) that hydrolyzes ATP and a membrane integral complex (V0) that translocates protons. V-ATPase is responsible for acidifying and maintaining the pH of intracellular compartments. In Schizosaccharomyces pombe (strain 972 / ATCC 24843) (Fission yeast), this protein is V-type proton ATPase subunit G (vma10).